Here is a 1114-residue protein sequence, read N- to C-terminus: Pre-mRNA-processing ATP-dependent RNA helicase prp5 (1114 aa).

Disordered regions lie at residues 20–168 (VLEV…TNYA), 181–200 (VASSSSAHALGRDLPLKELS), and 257–356 (RALD…AMDE). Basic and acidic residues-rich tracts occupy residues 31 to 67 (RERDYRDRRDDSYDDRARRRREDSTDSWSRSRGDENR) and 93 to 122 (EEQKKAERLAKLEAWKKKMAEDKERKEKEL). Over residues 141–156 (SSSQPSPNTPTTPSTS) the composition is skewed to low complexity. Basic and acidic residues-rich tracts occupy residues 190-200 (LGRDLPLKELS) and 257-273 (RALDFDEDEGSRKKLEK). Acidic residues predominate over residues 295-313 (GQDDDDDAELEAAGTEEEA). The span at 320 to 330 (AAEKREERLQE) shows a compositional bias: basic and acidic residues. The Q motif signature appears at 483-511 (QKWSQCGLDVKSLDVIKKLGYDKPTSIQM). The Helicase ATP-binding domain maps to 514–692 (IPAIMSGRDV…KKTLQSPVEI (179 aa)). 527–534 (AKTGSGKT) is a binding site for ATP. Positions 640 to 643 (DEAD) match the DEAD box motif. The region spanning 703–867 (EITQIVEVRE…EVPERLNEMR (165 aa)) is the Helicase C-terminal domain. Composition is skewed to basic and acidic residues over residues 869 to 882 (SYKDKVKSGAKKES) and 889 to 902 (GLERFDAEREATKA). A disordered region spans residues 869–924 (SYKDKVKSGAKKESSGFGGKGLERFDAEREATKARERKIHKLNGDDDEEEKEEKDD). The span at 913–924 (DDDEEEKEEKDD) shows a compositional bias: acidic residues.

Belongs to the DEAD box helicase family. DDX46/PRP5 subfamily.

It is found in the nucleus. The catalysed reaction is ATP + H2O = ADP + phosphate + H(+). Its function is as follows. ATP-dependent RNA helicase involved spliceosome assembly and in nuclear splicing. Catalyzes an ATP-dependent conformational change of U2 snRNP. Bridges U1 and U2 snRNPs and enables stable U2 snRNP association with intron RNA. The polypeptide is Pre-mRNA-processing ATP-dependent RNA helicase prp5 (prp5) (Sclerotinia sclerotiorum (strain ATCC 18683 / 1980 / Ss-1) (White mold)).